Here is a 107-residue protein sequence, read N- to C-terminus: Sulfurtransferase Alvin_2599 (107 aa).

The Rhodanese domain maps to 16–104; that stretch reads DTEDVLLVDI…WARHGLPIVA (89 aa). The Cysteine persulfide intermediate role is filled by C64.

As to quaternary structure, monomer.

It is found in the cytoplasm. The protein operates within energy metabolism; sulfur metabolism. In terms of biological role, sulfur carrier protein involved in sulfur trafficking for oxidative dissimilatory sulfur metabolism. Component of a sulfur relay system that starts with the sulfur-mobilizing rhodanese-like protein Rhd_2599 (Alvin_2599), which transfers the sulfur from a low-molecular-weight thiol, maybe glutathione, to the TusA protein (Alvin_2600); TusA serves as the sulfur donor for DsrEFH, which persulfurates DsrC; persulfurated DsrC very probably serves as a direct substrate for reverse-acting sulfite reductase, DsrAB. Is able to catalyze the sulfur transfer reaction from thiosulfate or glutathione (GSSH) to cyanide in vitro, however, thiosulfate is unlikely an in vivo substrate. The chain is Sulfurtransferase Alvin_2599 from Allochromatium vinosum (strain ATCC 17899 / DSM 180 / NBRC 103801 / NCIMB 10441 / D) (Chromatium vinosum).